A 351-amino-acid polypeptide reads, in one-letter code: Phospho-N-acetylmuramoyl-pentapeptide-transferase (351 aa).

The next 10 helical transmembrane spans lie at Met-17–Leu-37, Gly-62–Trp-82, Ile-85–Phe-105, Ile-130–Ile-150, Leu-163–Asn-183, Gly-190–Thr-210, Leu-230–Tyr-250, Ile-254–Ile-274, Phe-281–Val-301, and Gln-328–Ile-348.

This sequence belongs to the glycosyltransferase 4 family. MraY subfamily. Mg(2+) serves as cofactor.

Its subcellular location is the cell inner membrane. It catalyses the reaction UDP-N-acetyl-alpha-D-muramoyl-L-alanyl-gamma-D-glutamyl-meso-2,6-diaminopimeloyl-D-alanyl-D-alanine + di-trans,octa-cis-undecaprenyl phosphate = di-trans,octa-cis-undecaprenyl diphospho-N-acetyl-alpha-D-muramoyl-L-alanyl-D-glutamyl-meso-2,6-diaminopimeloyl-D-alanyl-D-alanine + UMP. The protein operates within cell wall biogenesis; peptidoglycan biosynthesis. Functionally, catalyzes the initial step of the lipid cycle reactions in the biosynthesis of the cell wall peptidoglycan: transfers peptidoglycan precursor phospho-MurNAc-pentapeptide from UDP-MurNAc-pentapeptide onto the lipid carrier undecaprenyl phosphate, yielding undecaprenyl-pyrophosphoryl-MurNAc-pentapeptide, known as lipid I. The polypeptide is Phospho-N-acetylmuramoyl-pentapeptide-transferase (Borreliella afzelii (strain PKo) (Borrelia afzelii)).